The sequence spans 1001 residues: Open rectifier potassium channel protein 1 (1001 aa).

The Cytoplasmic portion of the chain corresponds to 1–6 (MSPNRW). Residues 7 to 27 (ILLLIFYISYLMFGAAIYYHI) form a helical membrane-spanning segment. Asn58 is a glycosylation site (N-linked (GlcNAc...) asparagine). The segment at residues 95-111 (AFFFAFTVCSTVGYGNI) is an intramembrane region (pore-forming). A helical transmembrane segment spans residues 120–140 (MIMIAYSVIGIPVNGILFAGL). The Cytoplasmic segment spans residues 141-170 (GEYFGRTFEAIYRRYKKYKMSTDMHYVPPQ). The helical transmembrane segment at 171 to 191 (LGLITTVVIALIPGIALFLLL) threads the bilayer. An intramembrane region (pore-forming) is located at residues 208–224 (LYYSYVTTTTIGFGDYV). The helical transmembrane segment at 244–264 (IFVIVWFIFSLGYLVMIMTFI) threads the bilayer. The Cytoplasmic segment spans residues 265–1001 (TRGLQSKKLA…TGSSGAPAEK (737 aa)). Residues Ser332, Ser373, Ser562, and Ser565 each carry the phosphoserine modification. The interval 591-668 (SQSYLRNGRG…QAPSARRGSM (78 aa)) is disordered. Phosphoserine is present on residues Ser685, Ser691, and Ser715. 2 disordered regions span residues 768–795 (GGAA…EPPQ) and 830–1001 (SPTG…PAEK). A compositionally biased stretch (low complexity) spans 832–841 (TGGAATAPAA). Positions 855–873 (AANQSQITAGPSNAPTVQS) are enriched in polar residues. Low complexity predominate over residues 911–926 (RRLSLRPSPLARELSP). The span at 961–983 (RPSTSSTHSPLSRIVQISQAQRK) shows a compositional bias: polar residues. Residues 984 to 1001 (SSMPSAAATGSSGAPAEK) show a composition bias toward low complexity.

The protein belongs to the two pore domain potassium channel (TC 1.A.1.8) family. As to expression, widespread expression in adult, strongest expression in muscle, brain and ovary. Also present at low levels in larva and embryo.

It localises to the membrane. Background potassium channel. Rectification is dependent on external potassium concentration. Acts as an outwardly rectifying channel but as external potassium levels increase, this is reversed. The polypeptide is Open rectifier potassium channel protein 1 (Ork1) (Drosophila melanogaster (Fruit fly)).